A 121-amino-acid chain; its full sequence is Large ribosomal subunit protein uL14c (121 aa).

This sequence belongs to the universal ribosomal protein uL14 family. As to quaternary structure, part of the 50S ribosomal subunit.

It is found in the plastid. The protein localises to the chloroplast. Its function is as follows. Binds to 23S rRNA. The protein is Large ribosomal subunit protein uL14c of Oedogonium cardiacum (Filamentous green alga).